The sequence spans 126 residues: Large ribosomal subunit protein bL17 (126 aa).

Belongs to the bacterial ribosomal protein bL17 family. Part of the 50S ribosomal subunit. Contacts protein L32.

This chain is Large ribosomal subunit protein bL17, found in Lactococcus lactis subsp. lactis (strain IL1403) (Streptococcus lactis).